We begin with the raw amino-acid sequence, 324 residues long: ATP-dependent 6-phosphofructokinase (324 aa).

G15 contributes to the ATP binding site. An ADP-binding site is contributed by 25 to 29; it reads RGVVR. Residues 76–77 and 106–109 each bind ATP; these read RF and GDGS. D107 is a Mg(2+) binding site. 130 to 132 lines the substrate pocket; the sequence is TID. The active-site Proton acceptor is D132. R159 contacts ADP. Residues R167 and 174–176 each bind substrate; that span reads MGR. ADP-binding positions include 190–192, K216, and 218–220; these read GCE and KRH. Substrate contacts are provided by residues E227, R248, and 254–257; that span reads HIQR.

It belongs to the phosphofructokinase type A (PFKA) family. ATP-dependent PFK group I subfamily. Prokaryotic clade 'B1' sub-subfamily. As to quaternary structure, homotetramer. Mg(2+) is required as a cofactor.

The protein resides in the cytoplasm. It catalyses the reaction beta-D-fructose 6-phosphate + ATP = beta-D-fructose 1,6-bisphosphate + ADP + H(+). The protein operates within carbohydrate degradation; glycolysis; D-glyceraldehyde 3-phosphate and glycerone phosphate from D-glucose: step 3/4. With respect to regulation, allosterically activated by ADP and other diphosphonucleosides, and allosterically inhibited by phosphoenolpyruvate. In terms of biological role, catalyzes the phosphorylation of D-fructose 6-phosphate to fructose 1,6-bisphosphate by ATP, the first committing step of glycolysis. The polypeptide is ATP-dependent 6-phosphofructokinase (Actinobacillus pleuropneumoniae serotype 5b (strain L20)).